A 129-amino-acid polypeptide reads, in one-letter code: Large ribosomal subunit protein uL22 (129 aa).

Belongs to the universal ribosomal protein uL22 family. In terms of assembly, part of the 50S ribosomal subunit.

In terms of biological role, this protein binds specifically to 23S rRNA; its binding is stimulated by other ribosomal proteins, e.g. L4, L17, and L20. It is important during the early stages of 50S assembly. It makes multiple contacts with different domains of the 23S rRNA in the assembled 50S subunit and ribosome. Its function is as follows. The globular domain of the protein is located near the polypeptide exit tunnel on the outside of the subunit, while an extended beta-hairpin is found that lines the wall of the exit tunnel in the center of the 70S ribosome. The polypeptide is Large ribosomal subunit protein uL22 (Brucella suis biovar 1 (strain 1330)).